The primary structure comprises 419 residues: Putative zinc metalloprotease spyM18_2031 (419 aa).

H18 is a binding site for Zn(2+). The active site involves E19. H22 is a Zn(2+) binding site. Transmembrane regions (helical) follow at residues 169–191 (LITNFAGPMNNFILGIVVFILLV), 301–323 (LAWSGAFTILNALKGLITGFSLN), 343–365 (LESVLSLMAMLSINLGIFNLIPI), and 392–411 (AYITLAGVAIMVVLMIAVTW). In terms of domain architecture, PDZ spans 175-274 (GPMNNFILGI…LKTVAVKPQK (100 aa)).

This sequence belongs to the peptidase M50B family. Requires Zn(2+) as cofactor.

The protein localises to the cell membrane. This is Putative zinc metalloprotease spyM18_2031 from Streptococcus pyogenes serotype M18 (strain MGAS8232).